Consider the following 236-residue polypeptide: Lipoprotein B (236 aa).

Positions 1–27 (MNKKYFKKYSSILIFSMSILAPMTLAS) are cleaved as a signal peptide. The N-palmitoyl cysteine moiety is linked to residue Cys-28. A lipid anchor (S-diacylglycerol cysteine) is attached at Cys-28. 2 disordered regions span residues 35 to 112 (EKDK…KSNV) and 134 to 236 (SEKQ…GDAF). A compositionally biased stretch (polar residues) spans 43 to 60 (STNLSEPNKSNTSKTNTF). Residues 61–74 (QDKKDSTNKIDSQE) are compositionally biased toward basic and acidic residues. Composition is skewed to polar residues over residues 75-112 (SSKTQSQNTSESNQNTKVDSSKTNNLATNQNNPSKSNV) and 143-157 (NASSLNSKQINNTLK). The segment covering 158–175 (NQDKTKQENDQFKQESKD) has biased composition (basic and acidic residues). Polar residues predominate over residues 193-212 (VISSQSTTRLEMPKNDQSNS). The span at 215-228 (EDNKKSPESPKWWE) shows a compositional bias: basic and acidic residues.

The protein belongs to the M.pulmonis LipAB lipoprotein family.

The protein resides in the cell membrane. The chain is Lipoprotein B (lipB) from Mycoplasmopsis pulmonis (strain UAB CTIP) (Mycoplasma pulmonis).